A 1056-amino-acid chain; its full sequence is Pleckstrin homology domain-containing family M member 1 (1056 aa).

In terms of domain architecture, RUN spans 41 to 183 (TSEDGDANTM…LSFELSYKSA (143 aa)). Disordered stretches follow at residues 215–245 (QRKE…RRNQ), 277–303 (GSKS…EDSD), and 360–422 (PAQA…QAHD). Ser219 is subject to Phosphoserine. Polar residues predominate over residues 389-404 (PVESTSGQQPSSTVSE). Phosphoserine occurs at positions 432 and 435. Residues 451-483 (SREQPLESASDHPIASYRGTPGSRPGLHRHFSQ) form a disordered region. Ser490 carries the post-translational modification Phosphoserine. In terms of domain architecture, PH 1 spans 534–625 (GLMKLGTVER…WLDRVREALQ (92 aa)). Residues 632-638 (EDEWVNV) carry the LIR motif. Positions 654–1056 (CLSPSDLLSE…RKYQEQNIFA (403 aa)) are interaction with RAB7A. The region spanning 683–777 (DAIKESLLYL…WRDLVRKVLA (95 aa)) is the PH 2 domain. The Phorbol-ester/DAG-type zinc-finger motif lies at 986-1040 (QHVYHCDLCTQRGFICQICQHHDIIFPFEFDTTVRCAECKTVFHQSCQAVVKKGC).

As to quaternary structure, interacts (via N- and C-terminus) with RAB7A (GTP-bound form). Simultaneously interacts with RAB7A and ARL8B; bringing about clustering and fusion of late endosomes and lysosomes. Interacts (via RUN domain) with ARL8B (GTP-bound form); the interaction is required for PLEKHM1 localization to lysosomes and for ARL8B function in delivery and degradation of endocytic and autophagic cargo in lysosomes. PLEKHM1 and PLEKHM2 compete for interaction with ARL8B. Interacts with ARL8A; the interaction is weaker than with ARL8B. Interacts with VPS41, VPS11, VPS18, VPS33A and VPS39; indicative for an association with the HOPS complex; the interactions with, at least, VPS41, VPS11, VPS18 and VPS33A require ARL8B. Interacts with GABARAP, GABARAPL, GABARAPL2, MAP1LC3A, MAP1LC3B and MAP1LC3C. Interacts with PAFAH1B. Interacts (via N- and C-terminus) with NDEL1. Interacts (via C-terminus) with MAP3K7. Interacts (via N- and C-terminus) with FAM98A. Interacts (via C-terminus) with DEF8; this interaction is weak but increased in a RAB7A-dependent manner. In colon carcinoma and breast carcinoma cells, it interacts with sialyl-lex-positive protein. (Microbial infection) Interacts with Salmonella typhimurium sifA. As to expression, expressed in placenta, liver, prostate, thymus, spleen, ovary, colon, colon carcinoma and peripheral blood lymphocytes (PBL). Weakly expressed in brain, lung, kidney, and testis. No expression in heart, skeletal muscle, pancreas and small intestine. Predominantly expressed in the breast carcinoma cell line MCF-7.

It is found in the autolysosome membrane. Its subcellular location is the endosome membrane. The protein localises to the late endosome membrane. The protein resides in the lysosome membrane. Functionally, acts as a multivalent adapter protein that regulates Rab7-dependent and HOPS complex-dependent fusion events in the endolysosomal system and couples autophagic and the endocytic trafficking pathways. Acts as a dual effector of RAB7A and ARL8B that simultaneously binds these GTPases, bringing about clustering and fusion of late endosomes and lysosomes. Required for late stages of endolysosomal maturation, facilitating both endocytosis-mediated degradation of growth factor receptors and autophagosome clearance. Interaction with Arl8b is a crucial factor in the terminal maturation of autophagosomes and to mediate autophagosome-lysosome fusion. Positively regulates lysosome peripheral distribution and ruffled border formation in osteoclasts. May be involved in negative regulation of endocytic transport from early endosome to late endosome/lysosome implicating its association with Rab7. May have a role in sialyl-lex-mediated transduction of apoptotic signals. Involved in bone resorption. In terms of biological role, (Microbial infection) In case of infection contributes to Salmonella typhimurium pathogenesis by supporting the integrity of the Salmonella-containing vacuole (SCV) probably in concert with the HOPS complex and Rab7. This chain is Pleckstrin homology domain-containing family M member 1, found in Homo sapiens (Human).